A 456-amino-acid polypeptide reads, in one-letter code: Bifunctional protein GlmU (456 aa).

The tract at residues 1–229 (MLNNAMSVVI…LSEVEGVNNR (229 aa)) is pyrophosphorylase. Residues 11–14 (LAAG), lysine 25, glutamine 76, 81–82 (GT), 103–105 (YGD), glycine 140, glutamate 154, asparagine 169, and asparagine 227 each bind UDP-N-acetyl-alpha-D-glucosamine. A Mg(2+)-binding site is contributed by aspartate 105. Position 227 (asparagine 227) interacts with Mg(2+). Residues 230-250 (LQLSRLERVYQSEQAEKLLLA) form a linker region. An N-acetyltransferase region spans residues 251-456 (GVMLRDPARF…EGWRRPVKKK (206 aa)). Positions 333 and 351 each coordinate UDP-N-acetyl-alpha-D-glucosamine. Histidine 363 functions as the Proton acceptor in the catalytic mechanism. Residues tyrosine 366 and asparagine 377 each coordinate UDP-N-acetyl-alpha-D-glucosamine. Residues alanine 380, 386–387 (NY), serine 405, alanine 423, and arginine 440 contribute to the acetyl-CoA site.

In the N-terminal section; belongs to the N-acetylglucosamine-1-phosphate uridyltransferase family. This sequence in the C-terminal section; belongs to the transferase hexapeptide repeat family. As to quaternary structure, homotrimer. Mg(2+) serves as cofactor.

The protein resides in the cytoplasm. It catalyses the reaction alpha-D-glucosamine 1-phosphate + acetyl-CoA = N-acetyl-alpha-D-glucosamine 1-phosphate + CoA + H(+). The enzyme catalyses N-acetyl-alpha-D-glucosamine 1-phosphate + UTP + H(+) = UDP-N-acetyl-alpha-D-glucosamine + diphosphate. Its pathway is nucleotide-sugar biosynthesis; UDP-N-acetyl-alpha-D-glucosamine biosynthesis; N-acetyl-alpha-D-glucosamine 1-phosphate from alpha-D-glucosamine 6-phosphate (route II): step 2/2. It functions in the pathway nucleotide-sugar biosynthesis; UDP-N-acetyl-alpha-D-glucosamine biosynthesis; UDP-N-acetyl-alpha-D-glucosamine from N-acetyl-alpha-D-glucosamine 1-phosphate: step 1/1. The protein operates within bacterial outer membrane biogenesis; LPS lipid A biosynthesis. Functionally, catalyzes the last two sequential reactions in the de novo biosynthetic pathway for UDP-N-acetylglucosamine (UDP-GlcNAc). The C-terminal domain catalyzes the transfer of acetyl group from acetyl coenzyme A to glucosamine-1-phosphate (GlcN-1-P) to produce N-acetylglucosamine-1-phosphate (GlcNAc-1-P), which is converted into UDP-GlcNAc by the transfer of uridine 5-monophosphate (from uridine 5-triphosphate), a reaction catalyzed by the N-terminal domain. This chain is Bifunctional protein GlmU, found in Shigella sonnei (strain Ss046).